The following is a 462-amino-acid chain: MTSLISITLDELLINEDINDDYTCCVCECLLIEALQCRNGHVACKNCFIKIVKSKKECMTCRCEIKSIESLSKNRYLEKEIRKLNINCPNSFLKRELNLNNNNKNGNGNEGSSANEIEQPQQPQQQQPQELIKDINNGCKEILTIDQLDSHLKQCEYRFLKCTNLYANDLCSELDICGYDYRYNQSEKHRDECPYGIIGCTLCGKDCSRVDIESHTENHCPKLLVKCPTCNQDQLIARCDLDDHLSVDCAMIEIDCILKESGCKERVKRNQLANHLSSDNHLLFINNQFNQQNDIINQLKLELSHCNDLNEILTAKLDRYNNDNTMFRGKWVISNWTDKLNQYPPKKYLSLDFNLSQNKPFSIRVYPNGSSVMWHNCTISLVKLYQTESTIKFSFEIENEDPLKNDLQTKTDIFKGLNDSWSLQFFKVCDQANNNGFIINDTLTINFSIKIKKCFENIFITE.

An RING-type; degenerate zinc finger spans residues 24-62 (CCVCECLLIEALQCRNGHVACKNCFIKIVKSKKECMTCR). The interval 104 to 127 (KNGNGNEGSSANEIEQPQQPQQQQ) is disordered. TRAF-type zinc fingers lie at residues 150-217 (SHLK…SHTE) and 214-273 (SHTE…NQLA). One can recognise an MATH domain in the interval 326–449 (MFRGKWVISN…NDTLTINFSI (124 aa)).

The protein belongs to the TNF receptor-associated factor family. A subfamily.

The protein localises to the cytoplasm. Its function is as follows. Probable adapter protein and signal transducer that links members of the tumor necrosis factor receptor family to different signaling pathways by association with the receptor cytoplasmic domain and kinases. This is TNF receptor-associated factor family protein DDB_G0267754 from Dictyostelium discoideum (Social amoeba).